The sequence spans 474 residues: Mitochondrial import inner membrane translocase subunit TIM44-1 (474 aa).

The transit peptide at 1 to 54 (MAIRKIIRDLLITKQPLLRQLFHQRVLRANARSEFLPAIGYTSHRRFSVFTEFS) directs the protein to the mitochondrion. The stretch at 68–88 (ERTVKELKERTEEFKGVTEDL) forms a coiled coil. The span at 132–143 (VKESFKLGKEEN) shows a compositional bias: basic and acidic residues. The tract at residues 132 to 165 (VKESFKLGKEENAESASSSGTRASQGEKQQSGST) is disordered. Positions 145-165 (ESASSSGTRASQGEKQQSGST) are enriched in polar residues.

It belongs to the Tim44 family. Probable component of the PAM complex at least composed of a mitochondrial HSP70 protein, TIMM44 and TIMM14. The complex interacts with the TIMM23 component of the TIM17:23 complex. As to expression, expressed in roots, flowers, young cotyledons and leaves.

Its subcellular location is the mitochondrion inner membrane. Functionally, essential component of the PAM complex, a complex required for the translocation of transit peptide-containing proteins from the inner membrane into the mitochondrial matrix in an ATP-dependent manner. Recruits mitochondrial HSP70 to drive protein translocation into the matrix using ATP as an energy source. The protein is Mitochondrial import inner membrane translocase subunit TIM44-1 (TIM44-1) of Arabidopsis thaliana (Mouse-ear cress).